The chain runs to 367 residues: Porin Omp2a (367 aa).

The first 22 residues, 1–22 (MNIKSLLLGSAAALVAASGAQA), serve as a signal peptide directing secretion.

Belongs to the alphaproteobacteria porin family. In terms of assembly, monomer.

The protein localises to the cell outer membrane. Functionally, forms passive diffusion pores that allow small molecular weight hydrophilic materials across the outer membrane. This Brucella melitensis biotype 1 (strain ATCC 23456 / CCUG 17765 / NCTC 10094 / 16M) protein is Porin Omp2a (omp2a).